Reading from the N-terminus, the 339-residue chain is DNA-directed RNA polymerase subunit alpha (339 aa).

The tract at residues 1-233 (MVREEVAGST…DLFLPFLHAE (233 aa)) is alpha N-terminal domain (alpha-NTD). The interval 264-339 (KKGIPLNCIF…IDLLKNKLSF (76 aa)) is alpha C-terminal domain (alpha-CTD).

The protein belongs to the RNA polymerase alpha chain family. In plastids the minimal PEP RNA polymerase catalytic core is composed of four subunits: alpha, beta, beta', and beta''. When a (nuclear-encoded) sigma factor is associated with the core the holoenzyme is formed, which can initiate transcription.

The protein localises to the plastid. Its subcellular location is the chloroplast. The enzyme catalyses RNA(n) + a ribonucleoside 5'-triphosphate = RNA(n+1) + diphosphate. DNA-dependent RNA polymerase catalyzes the transcription of DNA into RNA using the four ribonucleoside triphosphates as substrates. The protein is DNA-directed RNA polymerase subunit alpha of Crithopsis delileana.